We begin with the raw amino-acid sequence, 160 residues long: Serine-protein kinase RsbW (160 aa).

This sequence belongs to the anti-sigma-factor family.

The catalysed reaction is L-seryl-[protein] + ATP = O-phospho-L-seryl-[protein] + ADP + H(+). It catalyses the reaction L-threonyl-[protein] + ATP = O-phospho-L-threonyl-[protein] + ADP + H(+). Functionally, negative regulator of sigma-B activity. Phosphorylates and inactivates its specific antagonist protein, RsbV. Upon phosphorylation of RsbV, RsbW is released and binds to sigma-B, thereby blocking its ability to form an RNA polymerase holoenzyme (E-sigma-B). This chain is Serine-protein kinase RsbW, found in Bacillus cereus (strain ATCC 10987 / NRS 248).